The primary structure comprises 331 residues: Anthranilate phosphoribosyltransferase (331 aa).

5-phospho-alpha-D-ribose 1-diphosphate-binding positions include Gly-79, Gly-82–Asp-83, Thr-87, Asn-89–Thr-92, Lys-107–Ser-115, and Ser-119. Gly-79 is an anthranilate binding site. Ser-91 is a Mg(2+) binding site. Asn-110 is an anthranilate binding site. Arg-165 lines the anthranilate pocket. Residues Asp-223 and Glu-224 each contribute to the Mg(2+) site.

The protein belongs to the anthranilate phosphoribosyltransferase family. In terms of assembly, homodimer. The cofactor is Mg(2+).

The catalysed reaction is N-(5-phospho-beta-D-ribosyl)anthranilate + diphosphate = 5-phospho-alpha-D-ribose 1-diphosphate + anthranilate. The protein operates within amino-acid biosynthesis; L-tryptophan biosynthesis; L-tryptophan from chorismate: step 2/5. Catalyzes the transfer of the phosphoribosyl group of 5-phosphorylribose-1-pyrophosphate (PRPP) to anthranilate to yield N-(5'-phosphoribosyl)-anthranilate (PRA). The sequence is that of Anthranilate phosphoribosyltransferase from Christiangramia forsetii (strain DSM 17595 / CGMCC 1.15422 / KT0803) (Gramella forsetii).